Here is a 67-residue protein sequence, read N- to C-terminus: Conotoxin TsMMSK-B022 (67 aa).

An N-terminal signal peptide occupies residues methionine 1 to serine 22. The propeptide occupies leucine 23–valine 50. Cystine bridges form between cysteine 53-cysteine 65, cysteine 54-cysteine 61, and cysteine 58-cysteine 64. Proline 63 is modified (4-hydroxyproline).

It belongs to the conotoxin M superfamily. In terms of tissue distribution, expressed by the venom duct.

It localises to the secreted. The sequence is that of Conotoxin TsMMSK-B022 from Conus tessulatus (Tessellate cone).